We begin with the raw amino-acid sequence, 226 residues long: Uridylate kinase (226 aa).

Residue 6–10 (KISGK) participates in ATP binding. Residue G43 coordinates UMP. G44 and R48 together coordinate ATP. Residues D65 and 113–119 (FQPGQST) contribute to the UMP site. ATP-binding residues include T139, N140, Y145, and D148.

The protein belongs to the UMP kinase family. In terms of assembly, homohexamer.

It is found in the cytoplasm. It catalyses the reaction UMP + ATP = UDP + ADP. It participates in pyrimidine metabolism; CTP biosynthesis via de novo pathway; UDP from UMP (UMPK route): step 1/1. With respect to regulation, inhibited by UTP. Functionally, catalyzes the reversible phosphorylation of UMP to UDP. The sequence is that of Uridylate kinase from Sulfurisphaera tokodaii (strain DSM 16993 / JCM 10545 / NBRC 100140 / 7) (Sulfolobus tokodaii).